The primary structure comprises 316 residues: Triplex capsid protein 2 (316 aa).

This sequence belongs to the herpesviridae TRX2 protein family. Interacts with TRX1 and major capisd protein/MCP.

It is found in the virion. The protein localises to the host nucleus. Functionally, structural component of the T=16 icosahedral capsid. The capsid is composed of pentamers and hexamers of major capsid protein/MCP, which are linked together by heterotrimers called triplexes. These triplexes are formed by a single molecule of triplex protein 1/TRX1 and two copies of triplex protein 2/TRX2. Additionally, TRX1 is required for efficient transport of TRX2 to the nucleus, which is the site of capsid assembly. The sequence is that of Triplex capsid protein 2 from Homo sapiens (Human).